Reading from the N-terminus, the 345-residue chain is GTPase Obg (345 aa).

Residues 1-159 (MKFIDEAIIK…RTLRLELKLL (159 aa)) form the Obg domain. Residues 127–148 (NARFKSSTNRAPRKTTQGKPGE) are disordered. Residues 130 to 144 (FKSSTNRAPRKTTQG) are compositionally biased toward polar residues. In terms of domain architecture, OBG-type G spans 160–334 (ADVGLLGLPN…LIHAVMQYLE (175 aa)). GTP-binding positions include 166 to 173 (GLPNAGKS), 191 to 195 (FTTLH), 213 to 216 (DIPG), 284 to 287 (NKTD), and 315 to 317 (SAL). Mg(2+) is bound by residues S173 and T193.

This sequence belongs to the TRAFAC class OBG-HflX-like GTPase superfamily. OBG GTPase family. As to quaternary structure, monomer. Requires Mg(2+) as cofactor.

It localises to the cytoplasm. Its function is as follows. An essential GTPase which binds GTP, GDP and possibly (p)ppGpp with moderate affinity, with high nucleotide exchange rates and a fairly low GTP hydrolysis rate. Plays a role in control of the cell cycle, stress response, ribosome biogenesis and in those bacteria that undergo differentiation, in morphogenesis control. The chain is GTPase Obg from Nitrosococcus oceani (strain ATCC 19707 / BCRC 17464 / JCM 30415 / NCIMB 11848 / C-107).